We begin with the raw amino-acid sequence, 301 residues long: Quinolinate synthase (301 aa).

Iminosuccinate-binding residues include His-21 and Ser-38. A [4Fe-4S] cluster-binding site is contributed by Cys-83. Iminosuccinate is bound by residues 109–111 (YIN) and Ser-126. Position 169 (Cys-169) interacts with [4Fe-4S] cluster. Iminosuccinate-binding positions include 195 to 197 (HPE) and Thr-212. Position 257 (Cys-257) interacts with [4Fe-4S] cluster.

This sequence belongs to the quinolinate synthase family. Type 2 subfamily. It depends on [4Fe-4S] cluster as a cofactor.

Its subcellular location is the cytoplasm. The enzyme catalyses iminosuccinate + dihydroxyacetone phosphate = quinolinate + phosphate + 2 H2O + H(+). It functions in the pathway cofactor biosynthesis; NAD(+) biosynthesis; quinolinate from iminoaspartate: step 1/1. In terms of biological role, catalyzes the condensation of iminoaspartate with dihydroxyacetone phosphate to form quinolinate. In Clostridium perfringens (strain ATCC 13124 / DSM 756 / JCM 1290 / NCIMB 6125 / NCTC 8237 / Type A), this protein is Quinolinate synthase.